Consider the following 466-residue polypeptide: Ribulose bisphosphate carboxylase large chain (466 aa).

Lysine 5 bears the N6,N6,N6-trimethyllysine mark. Residues asparagine 114 and threonine 164 each coordinate substrate. Lysine 166 functions as the Proton acceptor in the catalytic mechanism. Lysine 168 provides a ligand contact to substrate. The Mg(2+) site is built by lysine 192, aspartate 194, and glutamate 195. An N6-carboxylysine modification is found at lysine 192. Histidine 285 acts as the Proton acceptor in catalysis. Residues arginine 286, histidine 318, and serine 370 each contribute to the substrate site.

The protein belongs to the RuBisCO large chain family. Type I subfamily. As to quaternary structure, heterohexadecamer of 8 large chains and 8 small chains; disulfide-linked. The disulfide link is formed within the large subunit homodimers. Mg(2+) serves as cofactor. The disulfide bond which can form in the large chain dimeric partners within the hexadecamer appears to be associated with oxidative stress and protein turnover.

Its subcellular location is the plastid. The protein localises to the chloroplast. It catalyses the reaction 2 (2R)-3-phosphoglycerate + 2 H(+) = D-ribulose 1,5-bisphosphate + CO2 + H2O. The enzyme catalyses D-ribulose 1,5-bisphosphate + O2 = 2-phosphoglycolate + (2R)-3-phosphoglycerate + 2 H(+). Functionally, ruBisCO catalyzes two reactions: the carboxylation of D-ribulose 1,5-bisphosphate, the primary event in carbon dioxide fixation, as well as the oxidative fragmentation of the pentose substrate in the photorespiration process. Both reactions occur simultaneously and in competition at the same active site. The chain is Ribulose bisphosphate carboxylase large chain from Drosera filiformis (Thread-leaved sundew).